A 356-amino-acid polypeptide reads, in one-letter code: Protein RecA (356 aa).

Glycine 67–threonine 74 serves as a coordination point for ATP.

This sequence belongs to the RecA family.

The protein localises to the cytoplasm. Its function is as follows. Can catalyze the hydrolysis of ATP in the presence of single-stranded DNA, the ATP-dependent uptake of single-stranded DNA by duplex DNA, and the ATP-dependent hybridization of homologous single-stranded DNAs. It interacts with LexA causing its activation and leading to its autocatalytic cleavage. This Yersinia pseudotuberculosis serotype I (strain IP32953) protein is Protein RecA.